The chain runs to 225 residues: ATP-dependent Clp protease proteolytic subunit (225 aa).

Residue serine 123 is the Nucleophile of the active site. Histidine 148 is an active-site residue.

Belongs to the peptidase S14 family. As to quaternary structure, fourteen ClpP subunits assemble into 2 heptameric rings which stack back to back to give a disk-like structure with a central cavity, resembling the structure of eukaryotic proteasomes.

It localises to the cytoplasm. The catalysed reaction is Hydrolysis of proteins to small peptides in the presence of ATP and magnesium. alpha-casein is the usual test substrate. In the absence of ATP, only oligopeptides shorter than five residues are hydrolyzed (such as succinyl-Leu-Tyr-|-NHMec, and Leu-Tyr-Leu-|-Tyr-Trp, in which cleavage of the -Tyr-|-Leu- and -Tyr-|-Trp bonds also occurs).. In terms of biological role, cleaves peptides in various proteins in a process that requires ATP hydrolysis. Has a chymotrypsin-like activity. Plays a major role in the degradation of misfolded proteins. The polypeptide is ATP-dependent Clp protease proteolytic subunit (Chlorobaculum tepidum (strain ATCC 49652 / DSM 12025 / NBRC 103806 / TLS) (Chlorobium tepidum)).